Consider the following 252-residue polypeptide: 3-deoxy-manno-octulosonate cytidylyltransferase (252 aa).

It belongs to the KdsB family.

It is found in the cytoplasm. It catalyses the reaction 3-deoxy-alpha-D-manno-oct-2-ulosonate + CTP = CMP-3-deoxy-beta-D-manno-octulosonate + diphosphate. Its pathway is nucleotide-sugar biosynthesis; CMP-3-deoxy-D-manno-octulosonate biosynthesis; CMP-3-deoxy-D-manno-octulosonate from 3-deoxy-D-manno-octulosonate and CTP: step 1/1. It functions in the pathway bacterial outer membrane biogenesis; lipopolysaccharide biosynthesis. Its function is as follows. Activates KDO (a required 8-carbon sugar) for incorporation into bacterial lipopolysaccharide in Gram-negative bacteria. This Solibacter usitatus (strain Ellin6076) protein is 3-deoxy-manno-octulosonate cytidylyltransferase.